Reading from the N-terminus, the 581-residue chain is MPVKRYLPFEVEVEDITLPDRTWPDKKITQAPQWCAVDLRDGNQALIDPMSPERKRRMFELLVKMGFKEIEVGFPSASQTDFDFVREIIEKNMIPDDVTIQVLVQAREHLIRRTFEACEGAKNVIVHFYNSTSILQRDVVFRMNKDQVKTLATDAAELIKTIAQDYPDTNWRWEYSPESYTGTEVEYAKEVVDAVVEVMDPTPENPIIINLPATVEMITPNVYADSIEWMHRNLNRRDSIILSLHPHNDRGTGVAAAELGYMAGADRIEGCLFGNGERTGNVCLVTLALNMLTQGVDPQLDFSDIKHIRRTVEYCNQLRVPERHPYGGDLVFTAFSGSHQDAINKGLDALAAKVKPGASSTEVAWEELRSTEWEVPYLPIDPKDVGRDYEAVIRVNSQSGKGGVAYIMKTDHGLKMPRSMQVEFSAVVQNVTDAEGGEVNSKEMWDIFATEYLDRSAPVEQIALRVENAQTENDDATITAELVVDGENQTVSGRGNGPLAAYANALESLNIDVEIQEYSQHARTSGDDAEAAAYVLAEVNGRMVWGVGIAGSITYASLKAVTSAVNRALDFKHQQLQNGGV.

Residues 32–306 enclose the Pyruvate carboxyltransferase domain; that stretch reads PQWCAVDLRD…DPQLDFSDIK (275 aa). The Mg(2+) site is built by Asp-41, His-245, His-247, and Asn-281. Positions 455–581 are regulatory domain; sequence RSAPVEQIAL…KHQQLQNGGV (127 aa).

This sequence belongs to the alpha-IPM synthase/homocitrate synthase family. LeuA type 2 subfamily. In terms of assembly, homodimer. The cofactor is Mg(2+).

Its subcellular location is the cytoplasm. It carries out the reaction 3-methyl-2-oxobutanoate + acetyl-CoA + H2O = (2S)-2-isopropylmalate + CoA + H(+). It functions in the pathway amino-acid biosynthesis; L-leucine biosynthesis; L-leucine from 3-methyl-2-oxobutanoate: step 1/4. In terms of biological role, catalyzes the condensation of the acetyl group of acetyl-CoA with 3-methyl-2-oxobutanoate (2-ketoisovalerate) to form 3-carboxy-3-hydroxy-4-methylpentanoate (2-isopropylmalate). This chain is 2-isopropylmalate synthase, found in Corynebacterium efficiens (strain DSM 44549 / YS-314 / AJ 12310 / JCM 11189 / NBRC 100395).